A 1225-amino-acid polypeptide reads, in one-letter code: DNA-directed RNA polymerase subunit beta' (1225 aa).

Cysteine 60, cysteine 62, cysteine 75, and cysteine 78 together coordinate Zn(2+). Mg(2+) contacts are provided by aspartate 450, aspartate 452, and aspartate 454. Zn(2+) is bound by residues cysteine 818, cysteine 892, cysteine 899, and cysteine 902.

Belongs to the RNA polymerase beta' chain family. In terms of assembly, the RNAP catalytic core consists of 2 alpha, 1 beta, 1 beta' and 1 omega subunit. When a sigma factor is associated with the core the holoenzyme is formed, which can initiate transcription. It depends on Mg(2+) as a cofactor. The cofactor is Zn(2+).

The enzyme catalyses RNA(n) + a ribonucleoside 5'-triphosphate = RNA(n+1) + diphosphate. DNA-dependent RNA polymerase catalyzes the transcription of DNA into RNA using the four ribonucleoside triphosphates as substrates. This chain is DNA-directed RNA polymerase subunit beta', found in Streptococcus pneumoniae (strain ATCC BAA-255 / R6).